Here is a 506-residue protein sequence, read N- to C-terminus: Maturase K (506 aa).

It belongs to the intron maturase 2 family. MatK subfamily.

The protein localises to the plastid. It localises to the chloroplast. In terms of biological role, usually encoded in the trnK tRNA gene intron. Probably assists in splicing its own and other chloroplast group II introns. In Styphnolobium japonicum (Japanese pagoda tree), this protein is Maturase K.